A 236-amino-acid polypeptide reads, in one-letter code: MGRAFEYRKASKLKRWGAMSKLFPKLGKIITMAAKEGGSDPDMNARLRTAIINAKAENMPKDNIEAAIKRATSKDTASMLEVSFEAKAPHGAQFFIECMTDNNTRTVANVKNILTKHGAEMLTKGSLEFMFDRKAIFEFALKDNMDLEELELELIDAGLEEIEEEDGVVIISTDYKNFGSLNSALEDMKIEIIKANLERMATSPISLTEQQQADIERIIDKLEDDEDVQKVFTNIA.

Belongs to the TACO1 family.

It localises to the cytoplasm. In Sulfurimonas denitrificans (strain ATCC 33889 / DSM 1251) (Thiomicrospira denitrificans (strain ATCC 33889 / DSM 1251)), this protein is Probable transcriptional regulatory protein Suden_1389.